Reading from the N-terminus, the 300-residue chain is tRNA pseudouridine synthase A (300 aa).

Catalysis depends on aspartate 67, which acts as the Nucleophile. Tyrosine 125 contacts substrate.

It belongs to the tRNA pseudouridine synthase TruA family. In terms of assembly, homodimer.

It catalyses the reaction uridine(38/39/40) in tRNA = pseudouridine(38/39/40) in tRNA. Functionally, formation of pseudouridine at positions 38, 39 and 40 in the anticodon stem and loop of transfer RNAs. This Synechococcus sp. (strain CC9902) protein is tRNA pseudouridine synthase A.